Consider the following 857-residue polypeptide: Catalase-peroxidase (857 aa).

The segment at residues 207–330 (WHSAGTYRVS…LAAVQMGLIY (124 aa)) is a cross-link (tryptophyl-tyrosyl-methioninium (Trp-Tyr) (with M-356)). The active-site Proton acceptor is the His208. A cross-link (tryptophyl-tyrosyl-methioninium (Tyr-Met) (with W-207)) is located at residues 330 to 356 (YVNPEGPNGKPDPIAAAKDIRETFGRM). His371 serves as a coordination point for heme b.

It belongs to the peroxidase family. Peroxidase/catalase subfamily. Homodimer or homotetramer. Heme b is required as a cofactor. In terms of processing, formation of the three residue Trp-Tyr-Met cross-link is important for the catalase, but not the peroxidase activity of the enzyme.

It catalyses the reaction H2O2 + AH2 = A + 2 H2O. The catalysed reaction is 2 H2O2 = O2 + 2 H2O. Functionally, bifunctional enzyme with both catalase and broad-spectrum peroxidase activity. This Rhodopirellula baltica (strain DSM 10527 / NCIMB 13988 / SH1) protein is Catalase-peroxidase.